A 242-amino-acid chain; its full sequence is Terpene cyclase dpfgB (242 aa).

7 helical membrane passes run 15–37 (DVAW…NYVG), 51–71 (ALMA…IYPF), 75–95 (LEMY…YTAV), 112–132 (LPLI…ALAA), 141–161 (AWSA…QLLC), 169–189 (SYFL…QDIL), and 205–225 (LYIW…ICLW).

It belongs to the paxB family.

Its subcellular location is the membrane. It participates in secondary metabolite biosynthesis; terpenoid biosynthesis. Functionally, terpene cyclase; part of the gene cluster that mediates the biosynthesis of diterpenoid pyrones. The first step of the pathway is the synthesis of the alpha-pyrone moiety by the polyketide synthase dpfgA via condensation of one acetyl-CoA starter unit with 3 malonyl-CoA units and 2 methylations. The alpha-pyrone is then combined with geranylgeranyl pyrophosphate (GGPP) formed by the GGPP synthase dpfgD through the action of the prenyltransferase dpfgC to yield a linear alpha-pyrone diterpenoid. Subsequent steps in the diterpenoid pyrone biosynthetic pathway involve the decalin core formation, which is initiated by the epoxidation of the C10-C11 olefin by the FAD-dependent oxidoreductase dpfgE, and is followed by a cyclization cascade catalyzed by the terpene cyclase dpfgB. The short chain dehydrogenase/reductase dpfgG then oxidizes the 8S hydroxy group to a ketone and the short chain dehydrogenase/reductase dpfgH reduces the ketone to the 8R hydroxy group to yield higginsianin B. Higginsianin B is further methylated by the methyltransferase dpfgI to produce the intermediate named FDDP B. The cytochrome P450 monooxygenase dfgpJ then catalyzes a three-step oxidation at C-27 to generate a carboxylic acid as well as C-26 hydroxylation. Finally, methyltransferase dpfgK methylates the carboxylic acid generated by dpfgJ, yielding the final diterpenoid pyrones from the pathway which were named FDDP D and FDDP E. This is Terpene cyclase dpfgB from Gibberella zeae (strain ATCC MYA-4620 / CBS 123657 / FGSC 9075 / NRRL 31084 / PH-1) (Wheat head blight fungus).